The chain runs to 165 residues: Protein AIG2 C (165 aa).

A substrate-binding site is contributed by 14–19 (YGSILE). Catalysis depends on Glu82, which acts as the Proton acceptor.

The protein belongs to the gamma-glutamylcyclotransferase family. In terms of tissue distribution, expressed in floral organs, leaves, stems and roots.

In terms of biological role, putative gamma-glutamylcyclotransferase. This chain is Protein AIG2 C, found in Arabidopsis thaliana (Mouse-ear cress).